The primary structure comprises 426 residues: Trophoblast glycoprotein (426 aa).

The signal sequence occupies residues 1 to 31 (MPGAGSRGPSAGDGRLRLARLALVLLGWVSA). Over 32–361 (SAPSSSVPSS…AVLPQSLQTS (330 aa)) the chain is Extracellular. The segment covering 33 to 47 (APSSSVPSSSTSPAA) has biased composition (low complexity). Residues 33–53 (APSSSVPSSSTSPAAFLASGS) form a disordered region. Residues 53 to 91 (SAQPPPAERCPAACECSEAARTVKCVNRNLLEVPADLPP) enclose the LRRNT domain. 2 cysteine pairs are disulfide-bonded: C62-C68 and C66-C77. 7 LRR repeats span residues 92–113 (YVRNLFLTGNQMTVLPAGAFAR), 116–139 (PLADLEALNLSGNHLKEVCAGAFE), 141–163 (LPGLRRLDLSHNPLTNLSAFAFA), 172–210 (PSPLEELILNHIVPPEDQRQNGSFEGMVAFEGMVAAALR), 215–238 (LRGLTRLELASNHFLFLPRDLLAQ), 239–261 (LPSLRYLDLRNNSLVSLTYASFR), and 262–281 (NLTHLESLHLEDNALKVLHN). A glycan (N-linked (GlcNAc...) asparagine) is linked at N124. Residue N281 is glycosylated (N-linked (GlcNAc...) asparagine). Positions 289–352 (GLAHVKVFLD…LNSSDLDCDA (64 aa)) constitute an LRRCT domain. Disulfide bonds link C304-C329 and C306-C350. Residues 362–382 (YVFLGIVLALIGAIFLLVLYL) traverse the membrane as a helical segment. Over 383–426 (NRKGIKKWMHNIRDACRDHMEGYHYRYEINADPRLTNLSSNSDV) the chain is Cytoplasmic. Residue S424 is modified to Phosphoserine.

Highly glycosylated. As to expression, highly expressed in embryo and placenta. In adult, expressed only in brain and ovary. Not detected in kidney small intestine, heart, spleen, testis, liver, lung, thymus and stomach.

It localises to the cell membrane. Its function is as follows. May function as an inhibitor of Wnt/beta-catenin signaling by indirectly interacting with LRP6 and blocking Wnt3a-dependent LRP6 internalization. The protein is Trophoblast glycoprotein (Tpbg) of Mus musculus (Mouse).